Reading from the N-terminus, the 562-residue chain is Arginine--tRNA ligase (562 aa).

Residues 121–131 (PNIAKPFSVGH) carry the 'HIGH' region motif.

Belongs to the class-I aminoacyl-tRNA synthetase family. In terms of assembly, monomer.

It localises to the cytoplasm. The enzyme catalyses tRNA(Arg) + L-arginine + ATP = L-arginyl-tRNA(Arg) + AMP + diphosphate. The chain is Arginine--tRNA ligase from Streptococcus uberis (strain ATCC BAA-854 / 0140J).